The sequence spans 491 residues: Cobyric acid synthase (491 aa).

Residues 250 to 437 (QLRVVVPVLP…VHGVFDHPQA (188 aa)) form the GATase cobBQ-type domain. Residue C331 is the Nucleophile of the active site. H429 is a catalytic residue.

Belongs to the CobB/CobQ family. CobQ subfamily.

It functions in the pathway cofactor biosynthesis; adenosylcobalamin biosynthesis. Its function is as follows. Catalyzes amidations at positions B, D, E, and G on adenosylcobyrinic A,C-diamide. NH(2) groups are provided by glutamine, and one molecule of ATP is hydrogenolyzed for each amidation. This chain is Cobyric acid synthase, found in Xanthomonas axonopodis pv. citri (strain 306).